Consider the following 396-residue polypeptide: 3-amino-4-hydroxybenzoate 2-monooxygenase PtnB3 (396 aa).

Residues Ala-19, Glu-38–Gln-39, and Arg-112 contribute to the FAD site. Tyr-217 functions as the Proton acceptor in the catalytic mechanism. FAD is bound at residue Asp-295.

Belongs to the 6-hydroxynicotinate 3-monooxygenase family. Requires FAD as cofactor.

It catalyses the reaction 3-amino-4-hydroxybenzoate + NADPH + O2 + H(+) = 3-amino-2,4-dihydroxybenzoate + NADP(+) + H2O. It functions in the pathway antibiotic biosynthesis. Functionally, part of a gene cluster involved in the biosynthesis of thioplatencin (ThioPTN) and platencin (PTN), potent and selective inhibitors of bacterial and mammalian fatty acid synthases. Catalyzes the hydroxylation of 3-amino-4-hydroxybenzoate (3,4-AHBA) to 3-amino-2,4-dihydroxybenzoate (3,2,4-ADHBA). The protein is 3-amino-4-hydroxybenzoate 2-monooxygenase PtnB3 of Streptomyces platensis.